A 386-amino-acid polypeptide reads, in one-letter code: L-lactate dehydrogenase (386 aa).

Residues 1–380 (MIISASTDYR…TSDSLVQVTQ (380 aa)) form the FMN hydroxy acid dehydrogenase domain. Tyr-24 provides a ligand contact to substrate. FMN contacts are provided by Ser-106 and Gln-127. Tyr-129 contributes to the substrate binding site. Position 155 (Thr-155) interacts with FMN. Residue Arg-164 coordinates substrate. Lys-251 is an FMN binding site. The active-site Proton acceptor is the His-275. Arg-278 is a binding site for substrate. Residue 306–330 (DSGIRSGLDVVRMIALGADGVMLGR) participates in FMN binding.

It belongs to the FMN-dependent alpha-hydroxy acid dehydrogenase family. FMN is required as a cofactor.

It is found in the cell inner membrane. It carries out the reaction (S)-lactate + A = pyruvate + AH2. Its function is as follows. Catalyzes the conversion of L-lactate to pyruvate. Is coupled to the respiratory chain. This chain is L-lactate dehydrogenase, found in Pectobacterium atrosepticum (strain SCRI 1043 / ATCC BAA-672) (Erwinia carotovora subsp. atroseptica).